The following is a 506-amino-acid chain: Heat stress transcription factor A-1 (506 aa).

Residues 157–207 (MEEEIEMLKRDKNVLMQELVRLRQQQQTTDHQLQTLGKRLQGMEQRQQQMM) are a coiled coil. The hydrophobic repeat HR-A/B stretch occupies residues 164–214 (LKRDKNVLMQELVRLRQQQQTTDHQLQTLGKRLQGMEQRQQQMMSFLAKAM). Residues 231 to 254 (RRRIVASNKKRRLPKQDGSLDSES) form a disordered region. The segment covering 232–243 (RRIVASNKKRRL) has biased composition (basic residues). The Nuclear localization signal signature appears at 239–242 (KKRR). An AHA motif is present at residues 449–456 (DSFWEQFL).

Belongs to the HSF family. Class A subfamily. Homotrimer. Post-translationally, exhibits temperature-dependent phosphorylation.

It localises to the nucleus. Its function is as follows. Transcriptional regulator that specifically binds DNA of heat shock promoter elements (HSE). This Oryza sativa subsp. japonica (Rice) protein is Heat stress transcription factor A-1 (HSFA1).